Reading from the N-terminus, the 99-residue chain is UPF0473 protein SMU_2077c (99 aa).

The protein belongs to the UPF0473 family.

The protein is UPF0473 protein SMU_2077c of Streptococcus mutans serotype c (strain ATCC 700610 / UA159).